The following is a 179-amino-acid chain: uncharacterized protein (179 aa).

The segment at 27–54 (TAKKSRVQAREARAAVEENKKAQLERDK) is disordered.

This is an uncharacterized protein from Escherichia coli (strain K12).